A 353-amino-acid chain; its full sequence is Photosystem II D2 protein (353 aa).

At Thr-2 the chain carries N-acetylthreonine. Thr-2 bears the Phosphothreonine mark. Residues 41-61 (CAYFALGGWFTGTTFVTSWYT) traverse the membrane as a helical segment. His-118 lines the chlorophyll a pocket. A helical transmembrane segment spans residues 125–141 (GFMLRQFELARSVQLRP). Pheophytin a-binding residues include Gln-130 and Asn-143. A helical transmembrane segment spans residues 153–166 (VFVSVFLIYPLGQS). His-198 contributes to the chlorophyll a binding site. Residues 208 to 228 (AALLCAIHGATVENTLFEDGD) traverse the membrane as a helical segment. 2 residues coordinate a plastoquinone: His-215 and Phe-262. Fe cation is bound at residue His-215. Residue His-269 coordinates Fe cation. Residues 279 to 295 (GLWMSALGVVGLALNLR) traverse the membrane as a helical segment.

Belongs to the reaction center PufL/M/PsbA/D family. In terms of assembly, PSII is composed of 1 copy each of membrane proteins PsbA, PsbB, PsbC, PsbD, PsbE, PsbF, PsbH, PsbI, PsbJ, PsbK, PsbL, PsbM, PsbT, PsbX, PsbY, PsbZ, Psb30/Ycf12, at least 3 peripheral proteins of the oxygen-evolving complex and a large number of cofactors. It forms dimeric complexes. The cofactor is The D1/D2 heterodimer binds P680, chlorophylls that are the primary electron donor of PSII, and subsequent electron acceptors. It shares a non-heme iron and each subunit binds pheophytin, quinone, additional chlorophylls, carotenoids and lipids. There is also a Cl(-1) ion associated with D1 and D2, which is required for oxygen evolution. The PSII complex binds additional chlorophylls, carotenoids and specific lipids..

It is found in the plastid. Its subcellular location is the chloroplast thylakoid membrane. It catalyses the reaction 2 a plastoquinone + 4 hnu + 2 H2O = 2 a plastoquinol + O2. Its function is as follows. Photosystem II (PSII) is a light-driven water:plastoquinone oxidoreductase that uses light energy to abstract electrons from H(2)O, generating O(2) and a proton gradient subsequently used for ATP formation. It consists of a core antenna complex that captures photons, and an electron transfer chain that converts photonic excitation into a charge separation. The D1/D2 (PsbA/PsbD) reaction center heterodimer binds P680, the primary electron donor of PSII as well as several subsequent electron acceptors. D2 is needed for assembly of a stable PSII complex. This chain is Photosystem II D2 protein, found in Nymphaea alba (White water-lily).